Reading from the N-terminus, the 374-residue chain is Anhydro-N-acetylmuramic acid kinase (374 aa).

12 to 19 (GTSLDGVD) contributes to the ATP binding site.

The protein belongs to the anhydro-N-acetylmuramic acid kinase family.

It catalyses the reaction 1,6-anhydro-N-acetyl-beta-muramate + ATP + H2O = N-acetyl-D-muramate 6-phosphate + ADP + H(+). Its pathway is amino-sugar metabolism; 1,6-anhydro-N-acetylmuramate degradation. It functions in the pathway cell wall biogenesis; peptidoglycan recycling. Catalyzes the specific phosphorylation of 1,6-anhydro-N-acetylmuramic acid (anhMurNAc) with the simultaneous cleavage of the 1,6-anhydro ring, generating MurNAc-6-P. Is required for the utilization of anhMurNAc either imported from the medium or derived from its own cell wall murein, and thus plays a role in cell wall recycling. The sequence is that of Anhydro-N-acetylmuramic acid kinase from Enterobacter sp. (strain 638).